The primary structure comprises 433 residues: Ribulose bisphosphate carboxylase/oxygenase activase, chloroplastic (433 aa).

The segment covering 1–20 (MAAAFSSTVGAPASTPTRSS) has biased composition (polar residues). The transit peptide at 1–53 (MAAAFSSTVGAPASTPTRSSFLGKKLNKPQVSAAVTYHGKSSSSNSRFKAMAA) directs the protein to the chloroplast. The disordered stretch occupies residues 1–60 (MAAAFSSTVGAPASTPTRSSFLGKKLNKPQVSAAVTYHGKSSSSNSRFKAMAAKEVDETK). 161–168 (GGKGQGKS) lines the ATP pocket.

This sequence belongs to the RuBisCO activase family.

The protein localises to the plastid. It is found in the chloroplast stroma. Its function is as follows. Activation of RuBisCO (ribulose-1,5-bisphosphate carboxylase/oxygenase; EC 4.1.1.39) involves the ATP-dependent carboxylation of the epsilon-amino group of lysine leading to a carbamate structure. This chain is Ribulose bisphosphate carboxylase/oxygenase activase, chloroplastic (RCA1), found in Zea mays (Maize).